The sequence spans 702 residues: DnaJ homolog subfamily C member 14 (702 aa).

2 disordered regions span residues 1 to 148 (MAQK…GGNG) and 165 to 229 (DELE…KRSQ). The span at 75 to 84 (HGPPGGPGPP) shows a compositional bias: pro residues. Residues 88-103 (EDPDQSETSSEEESGV) are compositionally biased toward acidic residues. Over residues 113–133 (TGNQKDGNSFLSIPSACNCQG) the composition is skewed to polar residues. Residues 165-175 (DELEEEYDDEE) are compositionally biased toward acidic residues. A compositionally biased stretch (basic residues) spans 192–201 (PPSRRQRHRF). Residues 202-217 (PTKEDTREGGRRDPRS) show a composition bias toward basic and acidic residues. Basic residues predominate over residues 218 to 227 (PGRHRLGRKR). 3 helical membrane-spanning segments follow: residues 250 to 270 (AGFWWLIELLVLVGEYVETCG), 300 to 320 (GWAQVMFQFLSQGFYCGVGLF), and 326 to 346 (LLGALLLLALALFLGFLQLGW). Residues 443-507 (NPFHVLGVEA…EKRKEYEMKR (65 aa)) enclose the J domain. Residues 658–702 (MPNGNFFAAPQPAPGAAAASKPNSTVPKGEAKPKRRKKVRRPFQR) form a disordered region. Positions 659 to 676 (PNGNFFAAPQPAPGAAAA) are enriched in low complexity. Positions 690–702 (PKRRKKVRRPFQR) are enriched in basic residues.

In terms of assembly, interacts with the FxxxFxxxF motif of DRD1 via its C-terminal domain. Highly expressed in pancreas and selectively expressed in brain, lung, liver, skeletal muscle and kidney.

The protein resides in the endoplasmic reticulum membrane. Its function is as follows. Regulates the export of target proteins, such as DRD1, from the endoplasmic reticulum to the cell surface. The protein is DnaJ homolog subfamily C member 14 (DNAJC14) of Homo sapiens (Human).